The following is a 112-amino-acid chain: Large ribosomal subunit protein P2-B (112 aa).

A disordered region spans residues 89–112; the sequence is APAAADAKKEEEEEDDDMGFGLFD.

This sequence belongs to the eukaryotic ribosomal protein P1/P2 family. In terms of assembly, P1 and P2 exist as dimers at the large ribosomal subunit. In terms of processing, phosphorylated.

Plays an important role in the elongation step of protein synthesis. The sequence is that of Large ribosomal subunit protein P2-B from Trypanosoma cruzi.